Consider the following 1789-residue polypeptide: Protein sprint (1789 aa).

Disordered regions lie at residues Thr-53–Pro-120, Thr-140–Asn-190, Pro-218–Gly-237, Gln-261–Leu-317, Leu-329–Asp-378, and Arg-401–Leu-460. Residues Ser-82–Asn-114 are compositionally biased toward low complexity. The span at Thr-140–Gln-149 shows a compositional bias: polar residues. The span at Pro-176–Ala-185 shows a compositional bias: acidic residues. Positions Arg-223–Cys-233 are enriched in polar residues. The span at Asn-295–Leu-317 shows a compositional bias: low complexity. The segment covering Gln-337–Asn-361 has biased composition (polar residues). Residues Gln-409–Ser-418 are compositionally biased toward low complexity. A compositionally biased stretch (acidic residues) spans Thr-428–Glu-445. The 94-residue stretch at Trp-473–Arg-566 folds into the SH2 domain. Disordered stretches follow at residues Phe-632–Gln-689, Thr-744–Gly-787, Gly-852–Ser-918, Asp-969–Leu-1006, Ala-1040–Pro-1067, Arg-1094–Pro-1123, and Pro-1138–Arg-1160. The segment covering Lys-639 to Pro-649 has biased composition (pro residues). Residues Thr-671–Ser-686 are compositionally biased toward low complexity. Residues Thr-857 to Ser-868 show a composition bias toward polar residues. Residues Ala-903–Asp-914 show a composition bias toward basic and acidic residues. Over residues Thr-974–Ser-984 the composition is skewed to low complexity. Composition is skewed to polar residues over residues Thr-994–Leu-1006 and Thr-1048–Gly-1065. A compositionally biased stretch (low complexity) spans Ser-1143–Gln-1154. In terms of domain architecture, VPS9 spans Arg-1531 to Glu-1673. Residues Cys-1689–Ala-1777 enclose the Ras-associating domain.

This sequence belongs to the RIN (Ras interaction/interference) family. As to expression, in late cellular blastoderm embryos, it is expressed in the posterior end. Then, as development proceeds, it is expressed in the developing midgut, amnioserosa and in a specific subset of CNS neurons. Isoform 1 is expressed earlier in developing midgut and amnioserosa, but is not expressed in the CNS.

Its function is as follows. Potential Ras effector protein. May function as a guanine nucleotide exchange (GEF), by exchanging bound GDP for free GTP. The chain is Protein sprint (spri) from Drosophila melanogaster (Fruit fly).